The following is an 84-amino-acid chain: Large ribosomal subunit protein bL27 (84 aa).

Belongs to the bacterial ribosomal protein bL27 family.

This is Large ribosomal subunit protein bL27 from Buchnera aphidicola subsp. Acyrthosiphon pisum (strain Tuc7).